The primary structure comprises 384 residues: GDP-mannose transporter (384 aa).

Residues 1–40 (MVEDKKTDDYTIEMDKMDQGSKNFEAAAPPPQPRTPPAGS) are Cytoplasmic-facing. The chain crosses the membrane as a helical span at residues 41–61 (ISNNPILPVLAYCGSSILMTV). Residues 62-69 (MNKYVLSG) lie on the Lumenal side of the membrane. The chain crosses the membrane as a helical span at residues 70-90 (LDFNLNFFLLCVQSIVCIVAI). Over 91–110 (QTCKSCGLITYRDFSADEAR) the chain is Cytoplasmic. The helical transmembrane segment at 111-127 (KWFPITLLLIGMIYTGS) threads the bilayer. Topologically, residues 128–134 (KALQFLS) are lumenal. Residues 135–151 (IPVYTIFKNLTIILIAY) form a helical membrane-spanning segment. At 152–160 (GEVLWFGGS) the chain is on the cytoplasmic side. A helical membrane pass occupies residues 161-182 (VTGLTLFSFGLMVLSSIIAAWA). The Lumenal segment spans residues 183–200 (DIKHAVESTGDATAKVST). Residues 201-221 (LNAGYIWMLVNCLCTSSYVLG) form a helical membrane-spanning segment. Over 222 to 236 (MRKRIKLTNFKDFDT) the chain is Cytoplasmic. The chain crosses the membrane as a helical span at residues 237–257 (LAMFYNNLLSIPVLIVLTGLM). Topologically, residues 258-276 (EDWSSANITRNFPPADRNN) are lumenal. The N-linked (GlcNAc...) asparagine glycan is linked to N264. Residues 277–297 (IIFAMILSGLSSVFISYTSAW) traverse the membrane as a helical segment. Over 298-305 (CVRVTSST) the chain is Cytoplasmic. A helical membrane pass occupies residues 306 to 326 (TYSMVGALNKLPIALSGLIFF). The Lumenal portion of the chain corresponds to 327–329 (DAP). A helical transmembrane segment spans residues 330–350 (VTFPSVSAIVVGFVSGIVYAV). Residues 351–384 (AKIKQNAKPKTGVLPMSNPPVSASSQSMRDSLRS) are Cytoplasmic-facing. The segment at 364–384 (LPMSNPPVSASSQSMRDSLRS) is disordered. The span at 369–384 (PPVSASSQSMRDSLRS) shows a compositional bias: polar residues.

Belongs to the TPT transporter family. SLC35D subfamily. In terms of assembly, homooligomer.

Its subcellular location is the golgi apparatus membrane. It is found in the cytoplasmic vesicle membrane. The protein resides in the endoplasmic reticulum membrane. Functionally, involved in the import of GDP-mannose from the cytoplasm into the Golgi lumen. The chain is GDP-mannose transporter (gmt1) from Aspergillus terreus (strain NIH 2624 / FGSC A1156).